A 438-amino-acid chain; its full sequence is MKKSKSKKKAAKAQEVEVKEPVKEPEPLPELEAAEDLQDLPEPDPELLASEPELEDLADPLDLEGPLEADLLPEEGLLEEEEEELSLPKVSTSDPVRQYLHEIGQVPLLTLEEEIDLARKVEEGMEAIKKLSEATGLDQELIREVVRAKILGTARIQKIPGLKEKPDPKTVEEVDGKLKSLPKELKRYLHIAREGEAARQHLIEANLRLVVSIAKKYTGRGLSFLDLIQEGNQGLIRAVEKFEYKRRFKFSTYATWWIRQAINRAIADQARTIRIPVHMVETINKLSRTARQLQQELGREPSYEEIAEAMGPGWDAKRVEETLKIAQEPVSLETPIGDEKDSFYGDFIPDENLPSPVEAAAQSLLSEELEKALSKLSEREAMVLKLRKGLIDGREHTLEEVGAYFGVTRERIRQIENKALRKLKYHESRTRKLRDFLE.

Residues 1-11 show a composition bias toward basic residues; it reads MKKSKSKKKAA. The interval 1 to 69 is disordered; that stretch reads MKKSKSKKKA…PLDLEGPLEA (69 aa). The span at 12-26 shows a compositional bias: basic and acidic residues; that stretch reads KAQEVEVKEPVKEPE. Composition is skewed to acidic residues over residues 27–45 and 52–69; these read PLPE…EPDP and PELE…PLEA. The sigma-70 factor domain-1 stretch occupies residues 93-128; the sequence is SDPVRQYLHEIGQVPLLTLEEEIDLARKVEEGMEAI. Residues 202-272 are sigma-70 factor domain-2; the sequence is LIEANLRLVV…NRAIADQART (71 aa). The short motif at 226–229 is the Interaction with polymerase core subunit RpoC element; that stretch reads DLIQ. Positions 281–359 are sigma-70 factor domain-3; it reads ETINKLSRTA…DENLPSPVEA (79 aa). The tract at residues 372-424 is sigma-70 factor domain-4; sequence ALSKLSEREAMVLKLRKGLIDGREHTLEEVGAYFGVTRERIRQIENKALRKLK. A DNA-binding region (H-T-H motif) is located at residues 398 to 417; that stretch reads LEEVGAYFGVTRERIRQIEN.

Belongs to the sigma-70 factor family. RpoD/SigA subfamily. Interacts transiently with the RNA polymerase catalytic core formed by RpoA, RpoB, RpoC and RpoZ (2 alpha, 1 beta, 1 beta' and 1 omega subunit) to form the RNA polymerase holoenzyme that can initiate transcription.

The protein resides in the cytoplasm. In terms of biological role, sigma factors are initiation factors that promote the attachment of RNA polymerase to specific initiation sites and are then released. This sigma factor is the primary sigma factor during exponential growth. The polypeptide is RNA polymerase sigma factor SigA (Thermus aquaticus).